A 420-amino-acid chain; its full sequence is MDKLIITGGQRLDGDIRISGAKNAALPILAATLLADEPVTVGNLPHLQDVTTLIELLGRMGVHVVIDDRMNVEVNATTIKELTAPYELVKTMRASILVLGPMVAHFGKASVSLPGGCAIGSRPVDIHLRGLEAMGADIEVTNGYVNASVDGRLKGARIVMDVVTVTGTENLMMAAALAEGTTYLENAAREPEVVDLADFINAMGGKISGAGTDTITIEGVERLTGCHHQVIADRIETGTYLIAAAITGGRIKTKDTVPGTLDAVLQKLEEAGAKITTGDDWIELDMQGRRPKAVSLRTAPYPAMPTDMQAQFMALNLVAEGTGTIVETIFENRFMHVQEMNRMGADIEVQGNTAICRGVEQLTGAPVMATDLRASASLVIAALAASGETTVDRIYHIDRGYECIEEKLQSLGAIIRRVPR.

22–23 (KN) serves as a coordination point for phosphoenolpyruvate. Arg93 provides a ligand contact to UDP-N-acetyl-alpha-D-glucosamine. The Proton donor role is filled by Cys117. Cys117 is modified (2-(S-cysteinyl)pyruvic acid O-phosphothioketal). 2 residues coordinate UDP-N-acetyl-alpha-D-glucosamine: Asp307 and Ile329.

The protein belongs to the EPSP synthase family. MurA subfamily.

The protein resides in the cytoplasm. It carries out the reaction phosphoenolpyruvate + UDP-N-acetyl-alpha-D-glucosamine = UDP-N-acetyl-3-O-(1-carboxyvinyl)-alpha-D-glucosamine + phosphate. Its pathway is cell wall biogenesis; peptidoglycan biosynthesis. Functionally, cell wall formation. Adds enolpyruvyl to UDP-N-acetylglucosamine. This chain is UDP-N-acetylglucosamine 1-carboxyvinyltransferase, found in Alcanivorax borkumensis (strain ATCC 700651 / DSM 11573 / NCIMB 13689 / SK2).